A 434-amino-acid polypeptide reads, in one-letter code: Ribosomal protein uS12 methylthiotransferase RimO (434 aa).

Residues 4-122 enclose the MTTase N-terminal domain; the sequence is NRVDVITLGC…LISHLGKSYY (119 aa). [4Fe-4S] cluster contacts are provided by C13, C51, C85, C146, C150, and C153. The Radical SAM core domain maps to 132-363; the sequence is TTPRHYAYLK…MAVQERISAA (232 aa). Positions 366–434 constitute a TRAM domain; sequence EAKIGSRLRV…PFDLYARIVD (69 aa).

Belongs to the methylthiotransferase family. RimO subfamily. [4Fe-4S] cluster serves as cofactor.

The protein resides in the cytoplasm. The catalysed reaction is L-aspartate(89)-[ribosomal protein uS12]-hydrogen + (sulfur carrier)-SH + AH2 + 2 S-adenosyl-L-methionine = 3-methylsulfanyl-L-aspartate(89)-[ribosomal protein uS12]-hydrogen + (sulfur carrier)-H + 5'-deoxyadenosine + L-methionine + A + S-adenosyl-L-homocysteine + 2 H(+). In terms of biological role, catalyzes the methylthiolation of an aspartic acid residue of ribosomal protein uS12. The chain is Ribosomal protein uS12 methylthiotransferase RimO from Porphyromonas gingivalis (strain ATCC 33277 / DSM 20709 / CIP 103683 / JCM 12257 / NCTC 11834 / 2561).